The chain runs to 513 residues: MAMEIDSRPGGLPGSSCNLGAAREHMQAVTRNYITHPRVTYRTVCSVNGPLVVLDRVKFAQYAEIVHFTLPDGTQRSGQVLEVAGTKAIVQVFEGTSGIDARKTTCEFTGDILRTPVSEDMLGRVFNGSGKPIDKGPVVMAEDFLDINGQPINPHSRIYPEEMIQTGISPIDVMNSIARGQKIPIFSAAGLPHNEIAAQICRQAGLVKKSKAVLDYHDDNFAIVFAAMGVNMETARFFKSDFEQNGTMGNVCLFLNLANDPTIERIITPRLALTTAEFLAYQCEKHVLVILTDMSSYAEALREVSAAREEVPGRRGFPGYMYTDLATIYERAGRVEGRGGSITQIPILTMPNDDITHPIPDLTGFITEGQIYVDRQLHNRQIYPPINVLPSLSRLMKSAIGEGMTRKDHGDVSNQLYACYAIGKDVQAMKAVVGEEALTSEDLLYLEFLQKFEKNFINQGPYENRSVFESLDLGWKLLRIFPKEMLKRIPQAVIDEFYSREGALQDLAPDTAL.

Residue Arg-394 participates in ATP binding. The PDZ-binding motif lies at Asp-510–Leu-513.

It belongs to the ATPase alpha/beta chains family. In terms of assembly, V-ATPase is a heteromultimeric enzyme made up of two complexes: the ATP-hydrolytic V1 complex and the proton translocation V0 complex. The V1 complex consists of three catalytic AB heterodimers that form a heterohexamer, three peripheral stalks each consisting of EG heterodimers, one central rotor including subunits D and F, and the regulatory subunits C and H. The proton translocation complex V0 consists of the proton transport subunit a, a ring of proteolipid subunits c9c'', rotary subunit d, subunits e and f, and the accessory subunits ATP6AP1/Ac45 and ATP6AP2/PRR. Forms a complex with NHERF1 and SCL4A7. In terms of tissue distribution, kidney; localizes to early distal nephron, encompassing thick ascending limbs and distal convoluted tubules (at protein level). Expressed in the cochlea and endolymphatic sac.

Its subcellular location is the apical cell membrane. It localises to the basolateral cell membrane. Non-catalytic subunit of the V1 complex of vacuolar(H+)-ATPase (V-ATPase), a multisubunit enzyme composed of a peripheral complex (V1) that hydrolyzes ATP and a membrane integral complex (V0) that translocates protons. V-ATPase is responsible for acidifying and maintaining the pH of intracellular compartments and in some cell types, is targeted to the plasma membrane, where it is responsible for acidifying the extracellular environment. Essential for the proper assembly and activity of V-ATPase. In renal intercalated cells, mediates secretion of protons (H+) into the urine thereby ensuring correct urinary acidification. Required for optimal olfactory function by mediating the acidification of the nasal olfactory epithelium. The sequence is that of V-type proton ATPase subunit B, kidney isoform (ATP6V1B1) from Homo sapiens (Human).